The following is a 165-amino-acid chain: Crossover junction endodeoxyribonuclease RuvC (165 aa).

Active-site residues include Asp7, Glu68, and His142. Mg(2+) is bound by residues Asp7, Glu68, and His142.

This sequence belongs to the RuvC family. As to quaternary structure, homodimer which binds Holliday junction (HJ) DNA. The HJ becomes 2-fold symmetrical on binding to RuvC with unstacked arms; it has a different conformation from HJ DNA in complex with RuvA. In the full resolvosome a probable DNA-RuvA(4)-RuvB(12)-RuvC(2) complex forms which resolves the HJ. Mg(2+) serves as cofactor.

It is found in the cytoplasm. It catalyses the reaction Endonucleolytic cleavage at a junction such as a reciprocal single-stranded crossover between two homologous DNA duplexes (Holliday junction).. The RuvA-RuvB-RuvC complex processes Holliday junction (HJ) DNA during genetic recombination and DNA repair. Endonuclease that resolves HJ intermediates. Cleaves cruciform DNA by making single-stranded nicks across the HJ at symmetrical positions within the homologous arms, yielding a 5'-phosphate and a 3'-hydroxyl group; requires a central core of homology in the junction. The consensus cleavage sequence is 5'-(A/T)TT(C/G)-3'. Cleavage occurs on the 3'-side of the TT dinucleotide at the point of strand exchange. HJ branch migration catalyzed by RuvA-RuvB allows RuvC to scan DNA until it finds its consensus sequence, where it cleaves and resolves the cruciform DNA. The polypeptide is Crossover junction endodeoxyribonuclease RuvC (Anaplasma marginale (strain St. Maries)).